We begin with the raw amino-acid sequence, 163 residues long: Auxin-responsive protein IAA5 (163 aa).

An EAR-like (transcriptional repression) motif is present at residues 15-19; it reads LRLGL. Residues 74-160 enclose the PB1 domain; the sequence is SSYVKVSVDG…KRLRIMKRSC (87 aa).

The protein belongs to the Aux/IAA family. In terms of assembly, homodimers and heterodimers. Highly expressed in stems and flowers.

It localises to the nucleus. In terms of biological role, aux/IAA proteins are short-lived transcriptional factors that function as repressors of early auxin response genes at low auxin concentrations. Repression is thought to result from the interaction with auxin response factors (ARFs), proteins that bind to the auxin-responsive promoter element (AuxRE). Formation of heterodimers with ARF proteins may alter their ability to modulate early auxin response genes expression. This is Auxin-responsive protein IAA5 (IAA5) from Arabidopsis thaliana (Mouse-ear cress).